We begin with the raw amino-acid sequence, 548 residues long: Eukaryotic translation initiation factor 3 subunit D (548 aa).

At Lys-53 the chain carries N6-acetyllysine. A Phosphoserine modification is found at Ser-161. Residues 285-299 (DFDLLTVSETANEPP) are RNA gate. A disordered region spans residues 523–548 (PDGTFSSDEDEEEEEEEEEEEEEEET). Ser-528 and Ser-529 each carry phosphoserine. Residues 529–548 (SDEDEEEEEEEEEEEEEEET) show a composition bias toward acidic residues.

The protein belongs to the eIF-3 subunit D family. Component of the eukaryotic translation initiation factor 3 (eIF-3) complex, which is composed of 13 subunits: EIF3A, EIF3B, EIF3C, EIF3D, EIF3E, EIF3F, EIF3G, EIF3H, EIF3I, EIF3J, EIF3K, EIF3L and EIF3M. The eIF-3 complex appears to include 3 stable modules: module A is composed of EIF3A, EIF3B, EIF3G and EIF3I; module B is composed of EIF3F, EIF3H, and EIF3M; and module C is composed of EIF3C, EIF3D, EIF3E, EIF3K and EIF3L. EIF3C of module C binds EIF3B of module A and EIF3H of module B, thereby linking the three modules. EIF3J is a labile subunit that binds to the eIF-3 complex via EIF3B. The eIF-3 complex interacts with RPS6KB1 under conditions of nutrient depletion. Mitogenic stimulation leads to binding and activation of a complex composed of MTOR and RPTOR, leading to phosphorylation and release of RPS6KB1 and binding of EIF4B to eIF-3.

The protein localises to the cytoplasm. MRNA cap-binding component of the eukaryotic translation initiation factor 3 (eIF-3) complex, a complex required for several steps in the initiation of protein synthesis of a specialized repertoire of mRNAs. The eIF-3 complex associates with the 40S ribosome and facilitates the recruitment of eIF-1, eIF-1A, eIF-2:GTP:methionyl-tRNAi and eIF-5 to form the 43S pre-initiation complex (43S PIC). The eIF-3 complex stimulates mRNA recruitment to the 43S PIC and scanning of the mRNA for AUG recognition. The eIF-3 complex is also required for disassembly and recycling of post-termination ribosomal complexes and subsequently prevents premature joining of the 40S and 60S ribosomal subunits prior to initiation. The eIF-3 complex specifically targets and initiates translation of a subset of mRNAs involved in cell proliferation, including cell cycling, differentiation and apoptosis, and uses different modes of RNA stem-loop binding to exert either translational activation or repression. In the eIF-3 complex, EIF3D specifically recognizes and binds the 7-methylguanosine cap of a subset of mRNAs. This is Eukaryotic translation initiation factor 3 subunit D from Macaca fascicularis (Crab-eating macaque).